The primary structure comprises 225 residues: UPF0758 protein Sbal223_0402 (225 aa).

An MPN domain is found at 102–224 (VLTNPDLTRD…IVSFAERGWI (123 aa)). Residues His173, His175, and Asp186 each contribute to the Zn(2+) site. Positions 173 to 186 (HNHPSGIAEPSQAD) match the JAMM motif motif.

It belongs to the UPF0758 family.

In Shewanella baltica (strain OS223), this protein is UPF0758 protein Sbal223_0402.